Consider the following 609-residue polypeptide: Vanadium chloroperoxidase (609 aa).

Vanadate is bound by residues K353, R360, S402, G403, H404, R490, and H496. H404 serves as the catalytic Proton donor. A disordered region spans residues 569–609 (KPTPPEIQPMPQETPVQKPVGQQPVKGMWEEEQAPVVKEAP).

Belongs to the vanadium-dependent haloperoxidase family. Homotetramer. Vanadate serves as cofactor. Post-translationally, the N-terminus is blocked.

It is found in the secreted. It carries out the reaction RH + Cl(-) + H2O2 = RCl + 2 H2O.. Its function is as follows. Catalyzes the oxidation of chloride in the presence of hydrogen peroxide to hypochlorous acid (ClOH), which in turn can react with a nucleophilic acceptor (RH), to form a chlorinated compound. The protein is Vanadium chloroperoxidase (CPO) of Curvularia inaequalis (Helminthosporium inaequale).